Consider the following 458-residue polypeptide: NADH-ubiquinone oxidoreductase chain 4 (458 aa).

A run of 13 helical transmembrane segments spans residues F22–T42, M63–S83, L96–T116, N117–F137, I150–L170, I194–L214, T224–I244, L257–L277, A284–L306, G311–N333, M350–P370, L391–L413, and L434–I454.

Belongs to the complex I subunit 4 family.

It is found in the mitochondrion membrane. The catalysed reaction is a ubiquinone + NADH + 5 H(+)(in) = a ubiquinol + NAD(+) + 4 H(+)(out). Core subunit of the mitochondrial membrane respiratory chain NADH dehydrogenase (Complex I) that is believed to belong to the minimal assembly required for catalysis. Complex I functions in the transfer of electrons from NADH to the respiratory chain. The immediate electron acceptor for the enzyme is believed to be ubiquinone. The protein is NADH-ubiquinone oxidoreductase chain 4 (MT-ND4) of Myxine glutinosa (Atlantic hagfish).